Here is a 401-residue protein sequence, read N- to C-terminus: Probable tRNA sulfurtransferase (401 aa).

The 106-residue stretch at 63 to 168 folds into the THUMP domain; sequence TTAEQALSCL…EREAFLYGAR (106 aa). ATP-binding positions include 186–187, 211–212, Arg-268, Gly-290, and Gln-299; these read LL and YF.

This sequence belongs to the ThiI family.

The protein resides in the cytoplasm. The catalysed reaction is [ThiI sulfur-carrier protein]-S-sulfanyl-L-cysteine + a uridine in tRNA + 2 reduced [2Fe-2S]-[ferredoxin] + ATP + H(+) = [ThiI sulfur-carrier protein]-L-cysteine + a 4-thiouridine in tRNA + 2 oxidized [2Fe-2S]-[ferredoxin] + AMP + diphosphate. It catalyses the reaction [ThiS sulfur-carrier protein]-C-terminal Gly-Gly-AMP + S-sulfanyl-L-cysteinyl-[cysteine desulfurase] + AH2 = [ThiS sulfur-carrier protein]-C-terminal-Gly-aminoethanethioate + L-cysteinyl-[cysteine desulfurase] + A + AMP + 2 H(+). It participates in cofactor biosynthesis; thiamine diphosphate biosynthesis. Its function is as follows. Catalyzes the ATP-dependent transfer of a sulfur to tRNA to produce 4-thiouridine in position 8 of tRNAs, which functions as a near-UV photosensor. Also catalyzes the transfer of sulfur to the sulfur carrier protein ThiS, forming ThiS-thiocarboxylate. This is a step in the synthesis of thiazole, in the thiamine biosynthesis pathway. The sulfur is donated as persulfide by IscS. This chain is Probable tRNA sulfurtransferase, found in Treponema pallidum subsp. pallidum (strain SS14).